Reading from the N-terminus, the 653-residue chain is Rab11 family-interacting protein 5 (653 aa).

A C2 domain is found at 5–146 (RGAEPAAGPS…AGRAQHTQWY (142 aa)). Phosphoserine is present on residues serine 176, serine 283, serine 286, serine 307, serine 357, and serine 367. The disordered stretch occupies residues 269 to 300 (GPGAELLTRSPSRSSWLSTEGGRDSAQSPKLF). The segment covering 277–286 (RSPSRSSWLS) has biased composition (polar residues). Disordered stretches follow at residues 342 to 402 (HIYN…AVLG) and 415 to 548 (PGAS…RSSL). Over residues 357–368 (SISGSLPSSGSL) the composition is skewed to low complexity. Over residues 375–387 (FSEEGPRSTDDTW) the composition is skewed to basic and acidic residues. 2 positions are modified to phosphoserine: serine 391 and serine 395. Composition is skewed to basic and acidic residues over residues 420–430 (PGEEEGARLPE) and 447–460 (VAEK…ERKP). Phosphoserine occurs at positions 494, 538, 547, and 553. The 63-residue stretch at 586–648 (KDSAVLDQSA…ETSPTLLQIP (63 aa)) folds into the FIP-RBD domain.

In terms of assembly, interacts with RAB11FIP4. Interacts with NAPG. Interacts with RO60. Interacts with RAB11A that has been activated by GTP binding. (Microbial infection) Interacts with Kaposi's sarcoma-associated herpesvirus/HHV-8 protein ORF45; this interaction results in the lysosomal degradation of ORF45 and the inhibition of viral particle release. In terms of processing, phosphorylated on serine and threonine residues. Phosphorylation at Ser-357 is PKA-dependent. In terms of tissue distribution, detected at low levels in heart, brain, placenta, lung, liver, adipocytes, kidney, spleen, skeletal muscle and pancreas.

It localises to the cytoplasm. The protein localises to the recycling endosome membrane. It is found in the early endosome membrane. The protein resides in the golgi apparatus membrane. Its subcellular location is the cytoplasmic vesicle. It localises to the secretory vesicle membrane. The protein localises to the mitochondrion membrane. Rab effector involved in protein trafficking from apical recycling endosomes to the apical plasma membrane. Involved in insulin granule exocytosis. May regulate V-ATPase intracellular transport in response to extracellular acidosis. The polypeptide is Rab11 family-interacting protein 5 (Homo sapiens (Human)).